Reading from the N-terminus, the 353-residue chain is ATP-dependent kinase YFH7 (353 aa).

31–39 is an ATP binding site; the sequence is GSPGSGKST.

It belongs to the YFH7 family.

ATP-dependent kinase that could be involved in endoplasmic reticulum membrane assembly. In Saccharomyces cerevisiae (strain RM11-1a) (Baker's yeast), this protein is ATP-dependent kinase YFH7 (YFH7).